The following is a 251-amino-acid chain: Small ribosomal subunit protein uS2 (251 aa).

This sequence belongs to the universal ribosomal protein uS2 family.

The protein is Small ribosomal subunit protein uS2 of Aromatoleum aromaticum (strain DSM 19018 / LMG 30748 / EbN1) (Azoarcus sp. (strain EbN1)).